Consider the following 164-residue polypeptide: S-ribosylhomocysteine lyase (164 aa).

Fe cation contacts are provided by His54, His58, and Cys128.

It belongs to the LuxS family. As to quaternary structure, homodimer. Fe cation serves as cofactor.

It carries out the reaction S-(5-deoxy-D-ribos-5-yl)-L-homocysteine = (S)-4,5-dihydroxypentane-2,3-dione + L-homocysteine. In terms of biological role, involved in the synthesis of autoinducer 2 (AI-2) which is secreted by bacteria and is used to communicate both the cell density and the metabolic potential of the environment. The regulation of gene expression in response to changes in cell density is called quorum sensing. Catalyzes the transformation of S-ribosylhomocysteine (RHC) to homocysteine (HC) and 4,5-dihydroxy-2,3-pentadione (DPD). The protein is S-ribosylhomocysteine lyase of Campylobacter jejuni subsp. jejuni serotype O:6 (strain 81116 / NCTC 11828).